We begin with the raw amino-acid sequence, 417 residues long: Carboxypeptidase A2 (417 aa).

The signal sequence occupies residues 1–16 (MRLTPLLVALFGYIYC). A propeptide spans 17–112 (QETFVGDQVL…EMLFNQQRER (96 aa)) (activation peptide). The Peptidase M14 domain occupies 120 to 412 (AYHTLEEIYQ…LGLKTIMEHV (293 aa)). Positions 177 and 180 each coordinate Zn(2+). Substrate is bound by residues 177–180 (HARE), arginine 235, and 252–253 (NR). Cysteine 246 and cysteine 269 are joined by a disulfide. Zn(2+) is bound at residue histidine 304. 305–306 (SY) contributes to the substrate binding site. A disulfide bond links cysteine 318 and cysteine 352. Tyrosine 356 is a binding site for substrate. Glutamate 378 functions as the Proton donor/acceptor in the catalytic mechanism.

It belongs to the peptidase M14 family. The cofactor is Zn(2+).

Its subcellular location is the secreted. The enzyme catalyses Similar to that of carboxypeptidase A (EC 3.4.17.1), but with a preference for bulkier C-terminal residues.. Carboxypeptidase that catalyzes the release of a C-terminal amino acid, with a preference for large aromatic C-terminal residues. This is Carboxypeptidase A2 (Cpa2) from Mus musculus (Mouse).